The sequence spans 203 residues: MKLRWLLILVVFLAGCSSKHDYTNPPWNPEVPVKRAMQWMPISEKAGAAWGVDPQLITAIIAIESGGNPAVVSKSGAVGLMQLKPSTSGRDVYRRMGWRGEPSVSELKNPERNISMGAAYLSILENGPLAGIKDPQVMRYAVVVSYANGAGALLRTFSSDRQDAIDEINDLDADEFFEHVVKKHPAPQAPRYIWKLQKALDAM.

The signal sequence occupies residues 1–15 (MKLRWLLILVVFLAG). Cys-16 carries the N-palmitoyl cysteine lipid modification. Residue Cys-16 is the site of S-diacylglycerol cysteine attachment.

The protein belongs to the transglycosylase Slt family.

It localises to the cell outer membrane. The enzyme catalyses Endolytic cleavage of the (1-&gt;4)-beta-glycosidic linkage between N-acetylmuramic acid (MurNAc) and N-acetylglucosamine (GlcNAc) residues in peptidoglycan with concomitant formation of a 1,6-anhydrobond in the MurNAc residue.. Functionally, murein-degrading enzyme. May play a role in recycling of muropeptides during cell elongation and/or cell division. Preferentially cleaves at a distance of more than two disaccharide units from the ends of the glycan chain. The sequence is that of Endo-type membrane-bound lytic murein transglycosylase A from Klebsiella pneumoniae (strain 342).